Here is a 328-residue protein sequence, read N- to C-terminus: GMP reductase (328 aa).

The active-site Thioimidate intermediate is C176. An NADP(+)-binding site is contributed by 205–228 (IIADGGIRTHGDIAKSIRFGASMI).

It belongs to the IMPDH/GMPR family. GuaC type 2 subfamily.

It carries out the reaction IMP + NH4(+) + NADP(+) = GMP + NADPH + 2 H(+). In terms of biological role, catalyzes the irreversible NADPH-dependent deamination of GMP to IMP. It functions in the conversion of nucleobase, nucleoside and nucleotide derivatives of G to A nucleotides, and in maintaining the intracellular balance of A and G nucleotides. This Streptococcus pneumoniae serotype 2 (strain D39 / NCTC 7466) protein is GMP reductase.